Consider the following 183-residue polypeptide: ATP synthase subunit b, chloroplastic (183 aa).

The helical transmembrane segment at 27 to 49 (LATNLINLTVVVGVLIFFGKGVL) threads the bilayer.

This sequence belongs to the ATPase B chain family. As to quaternary structure, F-type ATPases have 2 components, F(1) - the catalytic core - and F(0) - the membrane proton channel. F(1) has five subunits: alpha(3), beta(3), gamma(1), delta(1), epsilon(1). F(0) has four main subunits: a(1), b(1), b'(1) and c(10-14). The alpha and beta chains form an alternating ring which encloses part of the gamma chain. F(1) is attached to F(0) by a central stalk formed by the gamma and epsilon chains, while a peripheral stalk is formed by the delta, b and b' chains.

Its subcellular location is the plastid. The protein resides in the chloroplast thylakoid membrane. Its function is as follows. F(1)F(0) ATP synthase produces ATP from ADP in the presence of a proton or sodium gradient. F-type ATPases consist of two structural domains, F(1) containing the extramembraneous catalytic core and F(0) containing the membrane proton channel, linked together by a central stalk and a peripheral stalk. During catalysis, ATP synthesis in the catalytic domain of F(1) is coupled via a rotary mechanism of the central stalk subunits to proton translocation. In terms of biological role, component of the F(0) channel, it forms part of the peripheral stalk, linking F(1) to F(0). This chain is ATP synthase subunit b, chloroplastic, found in Hordeum vulgare (Barley).